We begin with the raw amino-acid sequence, 301 residues long: Acetylglutamate kinase (301 aa).

Substrate is bound by residues 68 to 69 (GG), Arg-90, and Asn-195.

The protein belongs to the acetylglutamate kinase family. ArgB subfamily.

It localises to the cytoplasm. It catalyses the reaction N-acetyl-L-glutamate + ATP = N-acetyl-L-glutamyl 5-phosphate + ADP. The protein operates within amino-acid biosynthesis; L-arginine biosynthesis; N(2)-acetyl-L-ornithine from L-glutamate: step 2/4. Functionally, catalyzes the ATP-dependent phosphorylation of N-acetyl-L-glutamate. This Ectopseudomonas mendocina (strain ymp) (Pseudomonas mendocina) protein is Acetylglutamate kinase.